Reading from the N-terminus, the 229-residue chain is Large ribosomal subunit protein uL1 (229 aa).

The protein belongs to the universal ribosomal protein uL1 family. Part of the 50S ribosomal subunit.

Functionally, binds directly to 23S rRNA. The L1 stalk is quite mobile in the ribosome, and is involved in E site tRNA release. In terms of biological role, protein L1 is also a translational repressor protein, it controls the translation of the L11 operon by binding to its mRNA. The chain is Large ribosomal subunit protein uL1 from Clostridium botulinum (strain Loch Maree / Type A3).